A 473-amino-acid chain; its full sequence is Ribulose bisphosphate carboxylase large chain (473 aa).

The substrate site is built by Asn-116 and Thr-166. Residue Lys-168 is the Proton acceptor of the active site. Lys-170 lines the substrate pocket. Residues Lys-194, Asp-196, and Glu-197 each coordinate Mg(2+). Lys-194 carries the N6-carboxylysine modification. Catalysis depends on His-287, which acts as the Proton acceptor. Substrate-binding residues include Arg-288, His-320, and Ser-372.

It belongs to the RuBisCO large chain family. Type I subfamily. As to quaternary structure, heterohexadecamer of 8 large chains and 8 small chains. It depends on Mg(2+) as a cofactor.

It catalyses the reaction 2 (2R)-3-phosphoglycerate + 2 H(+) = D-ribulose 1,5-bisphosphate + CO2 + H2O. It carries out the reaction D-ribulose 1,5-bisphosphate + O2 = 2-phosphoglycolate + (2R)-3-phosphoglycerate + 2 H(+). In terms of biological role, ruBisCO catalyzes two reactions: the carboxylation of D-ribulose 1,5-bisphosphate, the primary event in carbon dioxide fixation, as well as the oxidative fragmentation of the pentose substrate. Both reactions occur simultaneously and in competition at the same active site. The protein is Ribulose bisphosphate carboxylase large chain of Nitrosomonas europaea (strain ATCC 19718 / CIP 103999 / KCTC 2705 / NBRC 14298).